We begin with the raw amino-acid sequence, 165 residues long: HTH-type transcriptional regulator IscR (165 aa).

The region spanning Arg-2–Ser-131 is the HTH rrf2-type domain. The segment at residues Leu-28 to Lys-51 is a DNA-binding region (H-T-H motif). Residues Cys-92, Cys-98, and Cys-104 each coordinate [2Fe-2S] cluster. Residues Asn-144–Ala-165 are disordered. The segment covering Gly-153 to Ala-165 has biased composition (polar residues).

It depends on [2Fe-2S] cluster as a cofactor.

Regulates the transcription of several operons and genes involved in the biogenesis of Fe-S clusters and Fe-S-containing proteins. The protein is HTH-type transcriptional regulator IscR of Sodalis glossinidius (strain morsitans).